We begin with the raw amino-acid sequence, 391 residues long: Xylose isomerase (391 aa).

Active-site residues include H54 and D57. Mg(2+)-binding residues include E181, E217, H220, D245, D255, D257, and D287.

The protein belongs to the xylose isomerase family. As to quaternary structure, homotetramer. Mg(2+) is required as a cofactor.

The protein resides in the cytoplasm. The catalysed reaction is alpha-D-xylose = alpha-D-xylulofuranose. Functionally, involved in D-xylose catabolism. The protein is Xylose isomerase (xylA) of Streptomyces albus G.